A 253-amino-acid chain; its full sequence is Claudin domain-containing protein 1 (253 aa).

A helical transmembrane segment spans residues 5–25 (FATAFVIACVLSLISTIYMAA). Residues asparagine 42 and asparagine 72 are each glycosylated (N-linked (GlcNAc...) asparagine). The next 3 membrane-spanning stretches (helical) occupy residues 141-161 (FLLPFVSLGLMCFGALIGLCA), 175-195 (ILHLLAGLCTLGSVSCYVAGI), and 216-236 (FCLACVSAPLQFMASALFIWA).

Belongs to the PMP-22/EMP/MP20 family.

The protein resides in the cell junction. It is found in the tight junction. Its subcellular location is the cell membrane. In terms of biological role, plays a role in negatively regulating the permeability of cells to small molecules. This Macaca fascicularis (Crab-eating macaque) protein is Claudin domain-containing protein 1 (CLDND1).